Reading from the N-terminus, the 547-residue chain is Delta-guaiene synthase 2 (547 aa).

Residues Asp299, Asp303, and Asp444 each contribute to the Mg(2+) site. The DDXXD motif motif lies at 299–303 (DDTYD).

It belongs to the terpene synthase family. Mg(2+) serves as cofactor.

The catalysed reaction is (2E,6E)-farnesyl diphosphate = delta-guaiene + diphosphate. The enzyme catalyses (2E,6E)-farnesyl diphosphate = alpha-guaiene + diphosphate. Its pathway is secondary metabolite biosynthesis; terpenoid biosynthesis. Sesquiterpene synthase involved in the biosynthesis of delta-guaiene (53.7%) and alpha-guaiene (44.6%), two structures composed of five- and seven-membered rings. Also produces 1.7% of alpha-humulene. This chain is Delta-guaiene synthase 2 (C3), found in Aquilaria crassna (Eagle wood).